The following is a 97-amino-acid chain: Serine protease inhibitor Kazal-type 8 (97 aa).

A signal peptide spans 1–21 (MKGICSDAILVLATSMWMAFA). Residues 36–96 (DKTIVECLKN…TKLYDGQCEN (61 aa)) enclose the Kazal-like domain. Intrachain disulfides connect C42-C76, C49-C73, and C62-C94. A glycan (N-linked (GlcNAc...) asparagine) is linked at N85.

The protein localises to the secreted. Probable serine protease inhibitor. The sequence is that of Serine protease inhibitor Kazal-type 8 (SPINK8) from Homo sapiens (Human).